Reading from the N-terminus, the 200-residue chain is Mpv17-like protein 2 (200 aa).

The next 3 helical transmembrane spans lie at 24 to 40, 63 to 83, and 102 to 122; these read ALLL…MAAG, ASMF…YLWL, and VLVD…LGLG.

Belongs to the peroxisomal membrane protein PXMP2/4 family. As to quaternary structure, interacts with the large mitochondrial ribosomal subunit.

Its subcellular location is the membrane. The protein localises to the mitochondrion inner membrane. Its function is as follows. Required for the assembly and stability of the mitochondrial ribosome. Is a positive regulator of mitochondrial protein synthesis. The sequence is that of Mpv17-like protein 2 (Mpv17l2) from Mus musculus (Mouse).